The chain runs to 346 residues: 3-dehydroquinate synthase (346 aa).

NAD(+)-binding positions include 62–67 (DGEQYK), 96–100 (GVISD), 120–121 (TT), lysine 133, and lysine 142. Glutamate 175, histidine 234, and histidine 251 together coordinate Zn(2+).

It belongs to the sugar phosphate cyclases superfamily. Dehydroquinate synthase family. Requires Co(2+) as cofactor. Zn(2+) serves as cofactor. NAD(+) is required as a cofactor.

The protein resides in the cytoplasm. It carries out the reaction 7-phospho-2-dehydro-3-deoxy-D-arabino-heptonate = 3-dehydroquinate + phosphate. It functions in the pathway metabolic intermediate biosynthesis; chorismate biosynthesis; chorismate from D-erythrose 4-phosphate and phosphoenolpyruvate: step 2/7. Catalyzes the conversion of 3-deoxy-D-arabino-heptulosonate 7-phosphate (DAHP) to dehydroquinate (DHQ). The chain is 3-dehydroquinate synthase from Campylobacter fetus subsp. fetus (strain 82-40).